Here is a 400-residue protein sequence, read N- to C-terminus: Phosphoglycerate kinase (400 aa).

Residues 23 to 25 (DLN), Arg38, 61 to 64 (HFGR), Arg120, and Arg153 each bind substrate. ATP contacts are provided by residues Lys203, Glu325, and 355–358 (GGDT).

This sequence belongs to the phosphoglycerate kinase family. As to quaternary structure, monomer.

It localises to the cytoplasm. It carries out the reaction (2R)-3-phosphoglycerate + ATP = (2R)-3-phospho-glyceroyl phosphate + ADP. It participates in carbohydrate degradation; glycolysis; pyruvate from D-glyceraldehyde 3-phosphate: step 2/5. The chain is Phosphoglycerate kinase from Methylobacterium radiotolerans (strain ATCC 27329 / DSM 1819 / JCM 2831 / NBRC 15690 / NCIMB 10815 / 0-1).